Reading from the N-terminus, the 107-residue chain is uncharacterized protein (107 aa).

The 102-residue stretch at 6–107 (KKVIEQILDN…QAQVETLLAA (102 aa)) folds into the Glutaredoxin domain. A glutathione-binding site is contributed by K23. C31 is a binding site for [2Fe-2S] cluster. Residues R60 and 85-86 (AD) each bind glutathione.

It belongs to the glutaredoxin family. Monothiol subfamily.

The protein resides in the plastid. It localises to the chloroplast. This is an uncharacterized protein from Porphyra purpurea (Red seaweed).